We begin with the raw amino-acid sequence, 486 residues long: Siroheme synthase (486 aa).

Residues 1-204 (MNYLPIFVDL…HQIEQAEALV (204 aa)) form a precorrin-2 dehydrogenase /sirohydrochlorin ferrochelatase region. Residues 22-23 (HV) and 43-44 (EK) contribute to the NAD(+) site. Residue S128 is modified to Phosphoserine. The uroporphyrinogen-III C-methyltransferase stretch occupies residues 216–486 (GEVSLVGAGP…NKETHWKQAA (271 aa)). P225 is an S-adenosyl-L-methionine binding site. Residue D248 is the Proton acceptor of the active site. Residue K270 is the Proton donor of the active site. Residues 301–303 (GGD), V306, 331–332 (TA), M383, and G412 contribute to the S-adenosyl-L-methionine site.

In the N-terminal section; belongs to the precorrin-2 dehydrogenase / sirohydrochlorin ferrochelatase family. It in the C-terminal section; belongs to the precorrin methyltransferase family.

It carries out the reaction uroporphyrinogen III + 2 S-adenosyl-L-methionine = precorrin-2 + 2 S-adenosyl-L-homocysteine + H(+). It catalyses the reaction precorrin-2 + NAD(+) = sirohydrochlorin + NADH + 2 H(+). The catalysed reaction is siroheme + 2 H(+) = sirohydrochlorin + Fe(2+). Its pathway is cofactor biosynthesis; adenosylcobalamin biosynthesis; precorrin-2 from uroporphyrinogen III: step 1/1. It functions in the pathway cofactor biosynthesis; adenosylcobalamin biosynthesis; sirohydrochlorin from precorrin-2: step 1/1. The protein operates within porphyrin-containing compound metabolism; siroheme biosynthesis; precorrin-2 from uroporphyrinogen III: step 1/1. It participates in porphyrin-containing compound metabolism; siroheme biosynthesis; siroheme from sirohydrochlorin: step 1/1. Its pathway is porphyrin-containing compound metabolism; siroheme biosynthesis; sirohydrochlorin from precorrin-2: step 1/1. In terms of biological role, multifunctional enzyme that catalyzes the SAM-dependent methylations of uroporphyrinogen III at position C-2 and C-7 to form precorrin-2 via precorrin-1. Then it catalyzes the NAD-dependent ring dehydrogenation of precorrin-2 to yield sirohydrochlorin. Finally, it catalyzes the ferrochelation of sirohydrochlorin to yield siroheme. The sequence is that of Siroheme synthase from Actinobacillus pleuropneumoniae serotype 7 (strain AP76).